Consider the following 241-residue polypeptide: Beta-nerve growth factor (241 aa).

An N-terminal signal peptide occupies residues 1–18; sequence MSMLFYTLITAFLIGIQA. Positions 19–121 are excised as a propeptide; it reads EPHSESNVPA…PVNRTHRSKR (103 aa). Residues asparagine 69, asparagine 114, and asparagine 166 are each glycosylated (N-linked (GlcNAc...) asparagine). 3 cysteine pairs are disulfide-bonded: cysteine 136-cysteine 201, cysteine 179-cysteine 229, and cysteine 189-cysteine 231.

Belongs to the NGF-beta family. In terms of assembly, homodimer. The homodimer interacts with a single NTRK1 chain. The homodimer interacts with a single NGFR chain. The NGF dimer interacts with a single SORCS2 chain (via extracellular domain). The NGF precursor (proNGF) binds to a receptor complex formed by SORT1 and NGFR, which leads to NGF endocytosis. Both mature NGF and the immature NGF precursor (proNGF) interact with SORCS2 and with the heterodimer formed by SORCS2 and NGFR (via extracellular domains). The NGF precursor (proNGF) has much higher affinity for SORCS2 than mature NGF. The NGF precursor (proNGF) has much higher affinity for SORT1 than mature NGF. Interacts with ADAM10 in a divalent cation-dependent manner. Interacts with SORCS3.

The protein localises to the secreted. Its subcellular location is the endosome lumen. Its function is as follows. Nerve growth factor is important for the development and maintenance of the sympathetic and sensory nervous systems. Extracellular ligand for the NTRK1 and NGFR receptors, activates cellular signaling cascades through those receptor tyrosine kinase to regulate neuronal proliferation, differentiation and survival. Inhibits metalloproteinase dependent proteolysis of platelet glycoprotein VI. The polypeptide is Beta-nerve growth factor (NGF) (Saimiri boliviensis boliviensis (Bolivian squirrel monkey)).